The chain runs to 151 residues: MGRMHSAGKGISSSAIPYSRNAPAWFKLSSESVIEQIVKYARKGLTPSQIGVLLRDAHGVTQARVITGNKIMRILKSNGLAPEIPEDLYYLIKKAVSVRKHLERNRKDKDAKFRLILIESRIHRLARYYRTVAVLPPNWKYESATASALVN.

Serine 32 is modified (phosphoserine). Glycyl lysine isopeptide (Lys-Gly) (interchain with G-Cter in ubiquitin) cross-links involve residues lysine 39 and lysine 43.

This sequence belongs to the universal ribosomal protein uS15 family. In terms of assembly, component of the small ribosomal subunit (SSU). Mature yeast ribosomes consist of a small (40S) and a large (60S) subunit. The 40S small subunit contains 1 molecule of ribosomal RNA (18S rRNA) and 33 different proteins (encoded by 57 genes). The large 60S subunit contains 3 rRNA molecules (25S, 5.8S and 5S rRNA) and 46 different proteins (encoded by 81 genes).

The protein localises to the cytoplasm. Its function is as follows. Component of the ribosome, a large ribonucleoprotein complex responsible for the synthesis of proteins in the cell. The small ribosomal subunit (SSU) binds messenger RNAs (mRNAs) and translates the encoded message by selecting cognate aminoacyl-transfer RNA (tRNA) molecules. The large subunit (LSU) contains the ribosomal catalytic site termed the peptidyl transferase center (PTC), which catalyzes the formation of peptide bonds, thereby polymerizing the amino acids delivered by tRNAs into a polypeptide chain. The nascent polypeptides leave the ribosome through a tunnel in the LSU and interact with protein factors that function in enzymatic processing, targeting, and the membrane insertion of nascent chains at the exit of the ribosomal tunnel. In Saccharomyces cerevisiae (strain ATCC 204508 / S288c) (Baker's yeast), this protein is Small ribosomal subunit protein uS15.